We begin with the raw amino-acid sequence, 226 residues long: ATP synthase F(0) complex subunit a (226 aa).

A run of 6 helical transmembrane segments spans residues 12–32 (PTMM…ILFP), 68–88 (WALM…LGLL), 97–117 (QLSM…ITGF), 138–158 (IPML…ALAV), 164–184 (ITAG…LMDI), and 189–209 (AFIT…VALI).

The protein belongs to the ATPase A chain family. Component of the ATP synthase complex composed at least of ATP5F1A/subunit alpha, ATP5F1B/subunit beta, ATP5MC1/subunit c (homooctomer), MT-ATP6/subunit a, MT-ATP8/subunit 8, ATP5ME/subunit e, ATP5MF/subunit f, ATP5MG/subunit g, ATP5MK/subunit k, ATP5MJ/subunit j, ATP5F1C/subunit gamma, ATP5F1D/subunit delta, ATP5F1E/subunit epsilon, ATP5PF/subunit F6, ATP5PB/subunit b, ATP5PD/subunit d, ATP5PO/subunit OSCP. ATP synthase complex consists of a soluble F(1) head domain (subunits alpha(3) and beta(3)) - the catalytic core - and a membrane F(0) domain - the membrane proton channel (subunits c, a, 8, e, f, g, k and j). These two domains are linked by a central stalk (subunits gamma, delta, and epsilon) rotating inside the F1 region and a stationary peripheral stalk (subunits F6, b, d, and OSCP). Interacts with DNAJC30; interaction is direct.

Its subcellular location is the mitochondrion inner membrane. It catalyses the reaction H(+)(in) = H(+)(out). Functionally, subunit a, of the mitochondrial membrane ATP synthase complex (F(1)F(0) ATP synthase or Complex V) that produces ATP from ADP in the presence of a proton gradient across the membrane which is generated by electron transport complexes of the respiratory chain. ATP synthase complex consist of a soluble F(1) head domain - the catalytic core - and a membrane F(1) domain - the membrane proton channel. These two domains are linked by a central stalk rotating inside the F(1) region and a stationary peripheral stalk. During catalysis, ATP synthesis in the catalytic domain of F(1) is coupled via a rotary mechanism of the central stalk subunits to proton translocation. With the subunit c (ATP5MC1), forms the proton-conducting channel in the F(0) domain, that contains two crucial half-channels (inlet and outlet) that facilitate proton movement from the mitochondrial intermembrane space (IMS) into the matrix. Protons are taken up via the inlet half-channel and released through the outlet half-channel, following a Grotthuss mechanism. This chain is ATP synthase F(0) complex subunit a, found in Halichoerus grypus (Gray seal).